Consider the following 712-residue polypeptide: Eukaryotic translation initiation factor 3 subunit B (712 aa).

The sufficient for interaction with HCR1 and TIF32 stretch occupies residues 1-98 (MSLTEAEYHE…LFVQFETSEM (98 aa)). A sufficient for interaction with PIC8 region spans residues 1–224 (MSLTEAEYHE…GVQSWGGADF (224 aa)). The region spanning 37–124 (NYVVVDGAPI…HRLLVNRLSD (88 aa)) is the RRM domain. 7 WD repeats span residues 191–229 (RKFFTSKYAKFSPKGTYLFSIHPQGVQSWGGADFSSIDK), 230–293 (FMHN…RTFA), 301–339 (QKEMPWPLVKWSHDDKYCARQGPGALAVYETPSFQLLDK), 342–384 (IKID…QTAR), 452–493 (ELKE…DFYA), 513–555 (ITDK…SNKN), and 566–604 (DKFSGMTNISWDPSGRFVATWSSSWLHTIENGYKLYEFT).

This sequence belongs to the eIF-3 subunit B family. In terms of assembly, component of the eukaryotic translation initiation factor 3 (eIF-3) complex.

The protein localises to the cytoplasm. Functionally, RNA-binding component of the eukaryotic translation initiation factor 3 (eIF-3) complex, which is involved in protein synthesis of a specialized repertoire of mRNAs and, together with other initiation factors, stimulates binding of mRNA and methionyl-tRNAi to the 40S ribosome. The eIF-3 complex specifically targets and initiates translation of a subset of mRNAs involved in cell proliferation. This is Eukaryotic translation initiation factor 3 subunit B from Scheffersomyces stipitis (strain ATCC 58785 / CBS 6054 / NBRC 10063 / NRRL Y-11545) (Yeast).